We begin with the raw amino-acid sequence, 356 residues long: D-alanine--D-alanine ligase (356 aa).

Positions 134 to 339 (KQLFEHRGLP…YSDLITKLID (206 aa)) constitute an ATP-grasp domain. Residue 167–222 (KDKLTYPVFVKPANLGSSVGISKCNNEDELKSGIEEAFQFDRKLVIEQGINAREVE) participates in ATP binding. Mg(2+) contacts are provided by Asp-293, Glu-306, and Asn-308.

The protein belongs to the D-alanine--D-alanine ligase family. Mg(2+) serves as cofactor. Requires Mn(2+) as cofactor.

Its subcellular location is the cytoplasm. The catalysed reaction is 2 D-alanine + ATP = D-alanyl-D-alanine + ADP + phosphate + H(+). It functions in the pathway cell wall biogenesis; peptidoglycan biosynthesis. Cell wall formation. The sequence is that of D-alanine--D-alanine ligase from Staphylococcus haemolyticus (strain JCSC1435).